Reading from the N-terminus, the 294-residue chain is Indole-3-glycerol phosphate synthase (294 aa).

Belongs to the TrpC family.

The enzyme catalyses 1-(2-carboxyphenylamino)-1-deoxy-D-ribulose 5-phosphate + H(+) = (1S,2R)-1-C-(indol-3-yl)glycerol 3-phosphate + CO2 + H2O. It functions in the pathway amino-acid biosynthesis; L-tryptophan biosynthesis; L-tryptophan from chorismate: step 4/5. This chain is Indole-3-glycerol phosphate synthase, found in Parasynechococcus marenigrum (strain WH8102).